A 333-amino-acid polypeptide reads, in one-letter code: Transaldolase NQM1 (333 aa).

Residue Lys-144 is the Schiff-base intermediate with substrate of the active site.

This sequence belongs to the transaldolase family. Type 1 subfamily. Homodimer.

It catalyses the reaction D-sedoheptulose 7-phosphate + D-glyceraldehyde 3-phosphate = D-erythrose 4-phosphate + beta-D-fructose 6-phosphate. It participates in carbohydrate degradation; pentose phosphate pathway; D-glyceraldehyde 3-phosphate and beta-D-fructose 6-phosphate from D-ribose 5-phosphate and D-xylulose 5-phosphate (non-oxidative stage): step 2/3. Its function is as follows. Transaldolase is important for the balance of metabolites in the pentose-phosphate pathway. The sequence is that of Transaldolase NQM1 (NQM1) from Saccharomyces cerevisiae (strain ATCC 204508 / S288c) (Baker's yeast).